Reading from the N-terminus, the 101-residue chain is Small ribosomal subunit protein uS14 (101 aa).

It belongs to the universal ribosomal protein uS14 family. In terms of assembly, part of the 30S ribosomal subunit. Contacts proteins S3 and S10.

Binds 16S rRNA, required for the assembly of 30S particles and may also be responsible for determining the conformation of the 16S rRNA at the A site. The chain is Small ribosomal subunit protein uS14 from Cupriavidus necator (strain ATCC 17699 / DSM 428 / KCTC 22496 / NCIMB 10442 / H16 / Stanier 337) (Ralstonia eutropha).